Consider the following 113-residue polypeptide: Large ribosomal subunit protein bL19m (113 aa).

This sequence belongs to the bacterial ribosomal protein bL19 family.

The protein localises to the mitochondrion. The polypeptide is Large ribosomal subunit protein bL19m (RPL19) (Reclinomonas americana).